The sequence spans 152 residues: Protein SprT-like (152 aa).

Residues Leu-6–Leu-151 form the SprT-like domain. His-67 is a Zn(2+) binding site. The active site involves Glu-68. His-71 contacts Zn(2+).

The protein belongs to the SprT family. Requires Zn(2+) as cofactor.

It is found in the cytoplasm. The polypeptide is Protein SprT-like (Lysinibacillus sphaericus (strain C3-41)).